Reading from the N-terminus, the 373-residue chain is 4-hydroxy-3-methylbut-2-en-1-yl diphosphate synthase (flavodoxin) (373 aa).

[4Fe-4S] cluster is bound by residues C270, C273, C305, and E312.

The protein belongs to the IspG family. The cofactor is [4Fe-4S] cluster.

It catalyses the reaction (2E)-4-hydroxy-3-methylbut-2-enyl diphosphate + oxidized [flavodoxin] + H2O + 2 H(+) = 2-C-methyl-D-erythritol 2,4-cyclic diphosphate + reduced [flavodoxin]. It participates in isoprenoid biosynthesis; isopentenyl diphosphate biosynthesis via DXP pathway; isopentenyl diphosphate from 1-deoxy-D-xylulose 5-phosphate: step 5/6. Converts 2C-methyl-D-erythritol 2,4-cyclodiphosphate (ME-2,4cPP) into 1-hydroxy-2-methyl-2-(E)-butenyl 4-diphosphate. The chain is 4-hydroxy-3-methylbut-2-en-1-yl diphosphate synthase (flavodoxin) from Erwinia tasmaniensis (strain DSM 17950 / CFBP 7177 / CIP 109463 / NCPPB 4357 / Et1/99).